The sequence spans 292 residues: 33 kDa chaperonin (292 aa).

2 disulfides stabilise this stretch: Cys237/Cys239 and Cys270/Cys273.

Belongs to the HSP33 family. In terms of processing, under oxidizing conditions two disulfide bonds are formed involving the reactive cysteines. Under reducing conditions zinc is bound to the reactive cysteines and the protein is inactive.

It localises to the cytoplasm. Its function is as follows. Redox regulated molecular chaperone. Protects both thermally unfolding and oxidatively damaged proteins from irreversible aggregation. Plays an important role in the bacterial defense system toward oxidative stress. The polypeptide is 33 kDa chaperonin (Lachnoclostridium phytofermentans (strain ATCC 700394 / DSM 18823 / ISDg) (Clostridium phytofermentans)).